Reading from the N-terminus, the 197-residue chain is Rac-like GTP-binding protein RHO1 (197 aa).

13 to 20 (GDGAVGKT) provides a ligand contact to GTP. Residues 35 to 43 (YVPTVFDNF) carry the Effector region motif. GTP-binding positions include 60-64 (DTAGQ) and 118-121 (TKLD). Residue C194 is modified to Cysteine methyl ester. C194 carries the S-geranylgeranyl cysteine lipid modification. Positions 195–197 (SIL) are cleaved as a propeptide — removed in mature form.

Belongs to the small GTPase superfamily. Rho family.

Its subcellular location is the cytoplasm. The protein resides in the membrane. Inactive GDP-bound Rho GTPases reside in the cytosol, are found in a complex with Rho GDP-dissociation inhibitors (Rho GDIs), and are released from the GDI protein in order to translocate to membranes upon activation. This chain is Rac-like GTP-binding protein RHO1 (RHO1), found in Beta vulgaris (Sugar beet).